Consider the following 628-residue polypeptide: Phosphomethylpyrimidine synthase (628 aa).

Residues Asn-225, Met-254, Tyr-283, His-319, 339-341 (SRG), 380-383 (DGLR), and Glu-419 contribute to the substrate site. Residue His-423 participates in Zn(2+) binding. Tyr-446 is a binding site for substrate. His-487 is a Zn(2+) binding site. Cys-567, Cys-570, and Cys-575 together coordinate [4Fe-4S] cluster.

It belongs to the ThiC family. As to quaternary structure, homodimer. [4Fe-4S] cluster is required as a cofactor.

The enzyme catalyses 5-amino-1-(5-phospho-beta-D-ribosyl)imidazole + S-adenosyl-L-methionine = 4-amino-2-methyl-5-(phosphooxymethyl)pyrimidine + CO + 5'-deoxyadenosine + formate + L-methionine + 3 H(+). Its pathway is cofactor biosynthesis; thiamine diphosphate biosynthesis. Functionally, catalyzes the synthesis of the hydroxymethylpyrimidine phosphate (HMP-P) moiety of thiamine from aminoimidazole ribotide (AIR) in a radical S-adenosyl-L-methionine (SAM)-dependent reaction. This chain is Phosphomethylpyrimidine synthase, found in Leptothrix cholodnii (strain ATCC 51168 / LMG 8142 / SP-6) (Leptothrix discophora (strain SP-6)).